The primary structure comprises 305 residues: MSDLDKQIEQLKRCEALKESEVKALCLKAMEILVEESNVQRVDAPVTICGDIHGQFYDMKELFKVGGDCPKTNYLFLGDFVDRGFYSVETFLLLLALKVRYPDRITLIRGNHESRQITQVYGFYDECLRKYGSVNVWRYCTDIFDYLSLSALVENKIFCVHGGLSPAIMTLDQIRAIDRKQEVPHDGAMCDLLWSDPEDIVDGWGLSPRGAGFLFGGSVVTSFNHSNNIDYICRAHQLVMEGYKWMFNSQIVTVWSAPNYCYRCGNVAAILELDENLNKEFRVFDAAPQESRGALAKKPAPDYFL.

Positions 51, 53, 79, and 111 each coordinate Mn(2+). His112 functions as the Proton donor in the catalytic mechanism. Mn(2+) contacts are provided by His161 and His236.

The protein belongs to the PPP phosphatase family. PP-4 (PP-X) subfamily. Requires Mn(2+) as cofactor. As to expression, ubiquitous, mostly expressed in root mersitems, flowers, and vascular tissues.

It is found in the plastid stroma. It catalyses the reaction O-phospho-L-seryl-[protein] + H2O = L-seryl-[protein] + phosphate. The enzyme catalyses O-phospho-L-threonyl-[protein] + H2O = L-threonyl-[protein] + phosphate. This Arabidopsis thaliana (Mouse-ear cress) protein is Serine/threonine-protein phosphatase PP-X isozyme 2 (PPX2).